Here is a 127-residue protein sequence, read N- to C-terminus: Small ribosomal subunit protein uS11 (127 aa).

The protein belongs to the universal ribosomal protein uS11 family. As to quaternary structure, part of the 30S ribosomal subunit. Interacts with proteins S7 and S18. Binds to IF-3.

Its function is as follows. Located on the platform of the 30S subunit, it bridges several disparate RNA helices of the 16S rRNA. Forms part of the Shine-Dalgarno cleft in the 70S ribosome. This Anaeromyxobacter dehalogenans (strain 2CP-C) protein is Small ribosomal subunit protein uS11.